The chain runs to 195 residues: Glycerol-3-phosphate acyltransferase (195 aa).

Transmembrane regions (helical) follow at residues 3–23, 52–72, 80–100, 113–133, and 147–167; these read FQVV…GFIL, LALL…AIAQ, ILFL…YLFF, LIFI…ICFL, and LIAL…IFAI.

Belongs to the PlsY family. As to quaternary structure, probably interacts with PlsX.

It localises to the cell inner membrane. It catalyses the reaction an acyl phosphate + sn-glycerol 3-phosphate = a 1-acyl-sn-glycero-3-phosphate + phosphate. The protein operates within lipid metabolism; phospholipid metabolism. In terms of biological role, catalyzes the transfer of an acyl group from acyl-phosphate (acyl-PO(4)) to glycerol-3-phosphate (G3P) to form lysophosphatidic acid (LPA). This enzyme utilizes acyl-phosphate as fatty acyl donor, but not acyl-CoA or acyl-ACP. This Ehrlichia ruminantium (strain Gardel) protein is Glycerol-3-phosphate acyltransferase.